Consider the following 173-residue polypeptide: Crossover junction endodeoxyribonuclease RuvC (173 aa).

Residues Asp8, Glu67, and Asp139 contribute to the active site. Positions 8, 67, and 139 each coordinate Mg(2+).

The protein belongs to the RuvC family. As to quaternary structure, homodimer which binds Holliday junction (HJ) DNA. The HJ becomes 2-fold symmetrical on binding to RuvC with unstacked arms; it has a different conformation from HJ DNA in complex with RuvA. In the full resolvosome a probable DNA-RuvA(4)-RuvB(12)-RuvC(2) complex forms which resolves the HJ. Mg(2+) serves as cofactor.

Its subcellular location is the cytoplasm. The enzyme catalyses Endonucleolytic cleavage at a junction such as a reciprocal single-stranded crossover between two homologous DNA duplexes (Holliday junction).. Functionally, the RuvA-RuvB-RuvC complex processes Holliday junction (HJ) DNA during genetic recombination and DNA repair. Endonuclease that resolves HJ intermediates. Cleaves cruciform DNA by making single-stranded nicks across the HJ at symmetrical positions within the homologous arms, yielding a 5'-phosphate and a 3'-hydroxyl group; requires a central core of homology in the junction. The consensus cleavage sequence is 5'-(A/T)TT(C/G)-3'. Cleavage occurs on the 3'-side of the TT dinucleotide at the point of strand exchange. HJ branch migration catalyzed by RuvA-RuvB allows RuvC to scan DNA until it finds its consensus sequence, where it cleaves and resolves the cruciform DNA. In Shigella flexneri serotype 5b (strain 8401), this protein is Crossover junction endodeoxyribonuclease RuvC.